Reading from the N-terminus, the 408-residue chain is Peptidase T (408 aa).

A Zn(2+)-binding site is contributed by histidine 78. Aspartate 80 is an active-site residue. Aspartate 141 provides a ligand contact to Zn(2+). Glutamate 175 (proton acceptor) is an active-site residue. Positions 176, 198, and 380 each coordinate Zn(2+).

It belongs to the peptidase M20B family. Zn(2+) is required as a cofactor.

Its subcellular location is the cytoplasm. The enzyme catalyses Release of the N-terminal residue from a tripeptide.. Its function is as follows. Cleaves the N-terminal amino acid of tripeptides. The polypeptide is Peptidase T (Clostridium acetobutylicum (strain ATCC 824 / DSM 792 / JCM 1419 / IAM 19013 / LMG 5710 / NBRC 13948 / NRRL B-527 / VKM B-1787 / 2291 / W)).